The chain runs to 295 residues: Thioredoxin-related transmembrane protein 2 (295 aa).

Positions 1–48 (MAVLAPLIALVYSVPRLSRWLARPYCLLSALLSIAFLLVRKLPPICNG) are cleaved as a signal peptide. The Extracellular portion of the chain corresponds to 49 to 102 (LPTQREDGNPCDFDWREVEILMFLSAIVMMKNRRSITVEQHVGNIFMFSKVANA). A helical transmembrane segment spans residues 103–125 (ILFFRLDIRMGLLYLTLCIVFLM). A Thioredoxin domain is found at 114–269 (LLYLTLCIVF…LYQRAKKLSK (156 aa)). Residues 126-295 (TCKPPLYMGP…VPDGENKKDK (170 aa)) are Cytoplasmic-facing. A phosphoserine mark is found at S211 and S243. Residues 266–295 (KLSKGGDMSEEKPGNPTPTAVPDGENKKDK) form a disordered region. Residues 292–295 (KKDK) carry the Di-lysine motif motif.

As to quaternary structure, monomer. Homodimer; disulfide-linked. Occurs in both reduced and oxidized monomeric form. Oxidative conditions increase homodimerization. Interacts with CANX. Interacts with ATP2A2.

Its subcellular location is the endoplasmic reticulum membrane. It is found in the mitochondrion membrane. Its function is as follows. Endoplasmic reticulum and mitochondria-associated protein that probably functions as a regulator of cellular redox state and thereby regulates protein post-translational modification, protein folding and mitochondrial activity. Indirectly regulates neuronal proliferation, migration, and organization in the developing brain. The chain is Thioredoxin-related transmembrane protein 2 (Tmx2) from Rattus norvegicus (Rat).